Reading from the N-terminus, the 246-residue chain is MTILDSPGAPDTGIDALALGTAVARVRETSSDQPLFTDRYSQMLVDAAGPMEPDQAALAVPGYVAARTKWFDDFFLAASAAGLAQIVLLSPGLDTRAWRLPWLNDTVIFEVDRPRTLAFKQQTLTRAGVTPTATYVPVPVDLGDDWPRALTAAGFSHGEPTAWAAEGLYADLPEAEQDNLLERIDLYSARGSRIAMDVDADGPDVVCWLCARHWEMGSTDAPDVMARYHRDAAGAPSGVFVEGRKL.

S-adenosyl-L-methionine-binding positions include Asp112 and Asp141–Leu142.

It belongs to the UPF0677 family.

Its function is as follows. Exhibits S-adenosyl-L-methionine-dependent methyltransferase activity. This Mycolicibacterium gilvum (strain PYR-GCK) (Mycobacterium gilvum (strain PYR-GCK)) protein is Putative S-adenosyl-L-methionine-dependent methyltransferase Mflv_0168.